The chain runs to 415 residues: Transposase for insertion sequence element IS1081 (415 aa).

It belongs to the transposase mutator family.

Its function is as follows. Required for the transposition of the insertion element. This Mycobacterium bovis (strain ATCC BAA-935 / AF2122/97) protein is Transposase for insertion sequence element IS1081.